The chain runs to 422 residues: tRNA hydroxylation protein P (422 aa).

The first 58 residues, 1 to 58, serve as a signal peptide directing secretion; that stretch reads MNQVELLSPAGNLKKLKIALNYGADAVYGGVSHFSLRNRAGKEFTLETFKEGIDYAHA.

It belongs to the peptidase U32 family.

Its function is as follows. Involved in prephenate-dependent formation of 5-hydroxyuridine (ho5U) modification at position 34 in tRNAs, the first step in 5-carboxymethoxyuridine (cmo5U) biosynthesis. The chain is tRNA hydroxylation protein P from Helicobacter pylori (strain ATCC 700392 / 26695) (Campylobacter pylori).